The chain runs to 526 residues: Peptide chain release factor 3 (526 aa).

The 270-residue stretch at 8–277 (NKRRTFAIIS…GLTEWAPKPQ (270 aa)) folds into the tr-type G domain. GTP contacts are provided by residues 17–24 (SHPDAGKT), 85–89 (DTPGH), and 139–142 (NKLD).

This sequence belongs to the TRAFAC class translation factor GTPase superfamily. Classic translation factor GTPase family. PrfC subfamily.

The protein localises to the cytoplasm. Its function is as follows. Increases the formation of ribosomal termination complexes and stimulates activities of RF-1 and RF-2. It binds guanine nucleotides and has strong preference for UGA stop codons. It may interact directly with the ribosome. The stimulation of RF-1 and RF-2 is significantly reduced by GTP and GDP, but not by GMP. This is Peptide chain release factor 3 from Actinobacillus pleuropneumoniae serotype 7 (strain AP76).